Here is a 1530-residue protein sequence, read N- to C-terminus: Regulating synaptic membrane exocytosis protein 2 (1530 aa).

A disordered region spans residues 1–34 (MSAPLGPRGRPAPTPAASQPPPQPEMPDLSHLTE). Positions 10–25 (RPAPTPAASQPPPQPE) are enriched in pro residues. The RabBD domain maps to 26 to 194 (MPDLSHLTEE…TKSGAWFYNS (169 aa)). The FYVE-type zinc-finger motif lies at 126 to 182 (KGDAPTCGICHKTKFADGCGHNCSYCQTKFCARCGGRVSLRSNKVMWVCNLCRKQQE). The Zn(2+) site is built by Cys132, Cys135, Cys148, Cys151, Cys156, Cys159, Cys174, and Cys177. Disordered stretches follow at residues 195–608 (GSNT…ERQK) and 632–655 (SGVD…HPVT). 5 stretches are compositionally biased toward basic and acidic residues: residues 210–225 (LRNE…KLHE), 327–338 (EPGHLNYRDSNR), 357–375 (RDEY…RYRS), 391–410 (EQMR…RHSD), and 419–443 (EDSR…RRAA). Ser409 carries the post-translational modification Phosphoserine. The span at 458-472 (AQGQSSYPQRTSNHS) shows a compositional bias: polar residues. Basic and acidic residues predominate over residues 484–501 (DRPDMRRADSLRKQHHLD). Positions 519-530 (RNDSLSSDQSES) are enriched in polar residues. A compositionally biased stretch (basic residues) spans 537 to 546 (RPHKSKKGGK). The span at 567–577 (SCDDVELESES) shows a compositional bias: acidic residues. 2 stretches are compositionally biased toward basic and acidic residues: residues 578–592 (VSEK…RKTS) and 643–653 (NEEHSHSDKHP). The 87-residue stretch at 677-763 (DGSVPRDSGA…EPQVELVVSR (87 aa)) folds into the PDZ domain. Residue Thr698 is modified to Phosphothreonine. The interval 771–802 (IPDSTHAQLESSSSSFESQKMDRPSISVTSPM) is disordered. Ser800 and Ser803 each carry phosphoserine. A C2 1 domain is found at 814–937 (LSGQLSIKLW…ALLDDEPHWY (124 aa)). Disordered regions lie at residues 948-982 (PLPR…SEVS), 1003-1122 (LQSS…ERSA), 1130-1149 (RQMK…RLEQ), 1154-1187 (KYRS…SRTS), 1242-1263 (SLEK…TSGK), and 1282-1307 (KSRS…QRST). Residues 1003 to 1024 (LQSSTLSVPEQVMSSNHCSPSG) are compositionally biased toward polar residues. Basic and acidic residues predominate over residues 1067–1086 (RMDRHRVMDDHYSSDRDRSH). Over residues 1088 to 1101 (RTGSVQTSPSSTPG) the composition is skewed to polar residues. Ser1095 is modified (phosphoserine). The span at 1154–1165 (KYRSGWDPHRGA) shows a compositional bias: basic and acidic residues. Phosphoserine is present on Ser1175. Residues 1178–1187 (SDVSAVSRTS) are compositionally biased toward low complexity. A Phosphoserine modification is found at Ser1251. The C2 2 domain occupies 1376 to 1494 (AMGDIQVGMM…ELSNMVIGWF (119 aa)). Phosphoserine is present on residues Ser1515 and Ser1518.

As to quaternary structure, interacts with TSPOAP1 and RIMBP2. Interacts with PPFIA3 and PPFIA4. Interacts via its zinc finger with the first C2 domain of UNC13A. Forms a complex consisting of UNC13A, RIMS2 and RAB3A. Heterodimer with PCLO. Part of a ternary complex involving PCLO and EPAC2. Interacts with RAB3A and RAB3B that have been activated by GTP-binding. Interacts with RAB3C, RAB3D and RAB26. As to expression, detected in testis, pituitary and an insulinoma cell line. Detected at low levels in cerebellar cortex.

The protein localises to the synapse. The protein resides in the synaptosome. Its function is as follows. Rab effector involved in exocytosis. May act as scaffold protein. Plays a role in dendrite formation by melanocytes. In Mus musculus (Mouse), this protein is Regulating synaptic membrane exocytosis protein 2 (Rims2).